The chain runs to 434 residues: Histidinol dehydrogenase (434 aa).

Positions 242, 264, and 267 each coordinate substrate. Zn(2+) contacts are provided by Gln-264 and His-267. Catalysis depends on proton acceptor residues Glu-332 and His-333. Positions 333, 366, 420, and 425 each coordinate substrate. Asp-366 provides a ligand contact to Zn(2+). His-425 is a binding site for Zn(2+).

It belongs to the histidinol dehydrogenase family. Zn(2+) is required as a cofactor.

It catalyses the reaction L-histidinol + 2 NAD(+) + H2O = L-histidine + 2 NADH + 3 H(+). It participates in amino-acid biosynthesis; L-histidine biosynthesis; L-histidine from 5-phospho-alpha-D-ribose 1-diphosphate: step 9/9. Functionally, catalyzes the sequential NAD-dependent oxidations of L-histidinol to L-histidinaldehyde and then to L-histidine. This is Histidinol dehydrogenase from Oleidesulfovibrio alaskensis (strain ATCC BAA-1058 / DSM 17464 / G20) (Desulfovibrio alaskensis).